The chain runs to 145 residues: MSRILGLDIGLKRIGVAVSDPFGVTATPLEFILNDEKVFEKINDLIKNYKISKIVIGLPLTLKGEEGEQARYTKEFVENLKNHIPQDIEIIFVDERFTSSLAEKTLLQTKKKNKKEKIDSLSAVFILQTYLDRLSFSNEATNYSY.

This sequence belongs to the YqgF nuclease family.

It is found in the cytoplasm. In terms of biological role, could be a nuclease involved in processing of the 5'-end of pre-16S rRNA. The protein is Putative pre-16S rRNA nuclease of Sulfurihydrogenibium sp. (strain YO3AOP1).